We begin with the raw amino-acid sequence, 803 residues long: Integrin beta-1 (803 aa).

The first 24 residues, 1–24 (MAETNLTLLTWAGILCCLIWSGSA), serve as a signal peptide directing secretion. Residue Gln25 is modified to Blocked amino end (Gln). Over 25-733 (QQGGSDCIKA…ETPECPSGPD (709 aa)) the chain is Extracellular. The PSI domain maps to 30-80 (DCIKANAKSCGECIQAGPNCGWCKKTDFLQEGEPTSARCDDLAALKSKGCP). 22 disulfide bridges follow: Cys31-Cys49, Cys39-Cys469, Cys42-Cys68, Cys52-Cys79, Cys211-Cys217, Cys265-Cys305, Cys405-Cys419, Cys439-Cys467, Cys471-Cys491, Cys482-Cys494, Cys496-Cys505, Cys507-Cys538, Cys521-Cys536, Cys530-Cys541, Cys543-Cys558, Cys560-Cys581, Cys565-Cys579, Cys573-Cys584, Cys586-Cys595, Cys597-Cys620, Cys604-Cys618, and Cys612-Cys623. The region spanning 144–382 (DYPIDLYYLM…QLIIDAYNSL (239 aa)) is the VWFA domain. The Mg(2+) site is built by Ser156 and Ser158. Ca(2+) is bound by residues Ser158, Asp161, Asp162, and Glu193. The interval 211-217 (CTGDQNC) is CX3CL1-binding. N-linked (GlcNAc...) asparagine glycosylation occurs at Asn216. Ca(2+)-binding residues include Asn248, Asp250, Pro252, and Glu253. Glu253 contacts Mg(2+). Asn273 carries N-linked (GlcNAc...) asparagine glycosylation. A CX3CL1-binding region spans residues 299–318 (LPNDGKCHLENNMYTMSHYY). N-linked (GlcNAc...) asparagine glycans are attached at residues Asn367, Asn410, Asn421, Asn433, Asn445, and Asn486. An interaction with TMEM182 region spans residues 387–470 (ILENSKLPKE…IHLQFICDCL (84 aa)). 4 I-EGF domains span residues 471 to 506 (CQSEGEPNSPACHDGNGTFECGACRCNEGRIGRLCE), 507 to 559 (CSTD…KYCE), 560 to 596 (CDNFNCDRSNGLICGGNGICKCRVCECFPNFTGSACD), and 597 to 636 (CSLDTTPCMAGNGQICNGRGTCECGTCNCTDPKFQGPTCE). N-linked (GlcNAc...) asparagine glycosylation occurs at Asn525. N-linked (GlcNAc...) asparagine glycosylation occurs at Asn589. Asn624 carries N-linked (GlcNAc...) asparagine glycosylation. 6 disulfide bridges follow: Cys625/Cys635, Cys638/Cys641, Cys645/Cys696, Cys651/Cys670, Cys654/Cys666, and Cys704/Cys728. Asn674 is a glycosylation site (N-linked (GlcNAc...) asparagine). A helical transmembrane segment spans residues 734-756 (IIPIVAGVVAGIVLIGLALLLIW). At 757 to 803 (KLLMIIHDRREFAKFEKEKMNAKWDTGENPIYKSAVTTVVNPKYEGK) the chain is on the cytoplasmic side. The residue at position 788 (Tyr788) is a Phosphotyrosine; by Tyr-kinases.

It belongs to the integrin beta chain family. Heterodimer of an alpha and a beta subunit. Beta-1 associates with either alpha-1, alpha-2, alpha-3, alpha-4, alpha-5, alpha-6, alpha-7, alpha-8, alpha-9, alpha-10, alpha-11 or alpha-V. Interacts with TMEM182 and LAMB1. In terms of tissue distribution, expressed on surface of embryonic fibroblasts (at protein level).

It is found in the cell membrane. Its subcellular location is the cell projection. It localises to the invadopodium membrane. The protein localises to the ruffle membrane. The protein resides in the melanosome. It is found in the lamellipodium. Its subcellular location is the ruffle. It localises to the cell junction. The protein localises to the focal adhesion. Functionally, integrins alpha-1/beta-1, alpha-2/beta-1, alpha-10/beta-1 and alpha-11/beta-1 are receptors for collagen. Integrins alpha-1/beta-1 and alpha-2/beta-1 recognize the proline-hydroxylated sequence G-F-P-G-E-R in collagen. Integrins alpha-2/beta-1, alpha-3/beta-1, alpha-4/beta-1, alpha-5/beta-1, alpha-8/beta-1, alpha-10/beta-1, alpha-11/beta-1 and alpha-V/beta-1 are receptors for fibronectin. Alpha-4/beta-1 recognizes one or more domains within the alternatively spliced CS-1 and CS-5 regions of fibronectin. Integrin alpha-5/beta-1 is a receptor for fibrinogen. Integrin alpha-1/beta-1, alpha-2/beta-1, alpha-6/beta-1 and alpha-7/beta-1 are receptors for lamimin. Integrin alpha-6/beta-1 (ITGA6:ITGB1) is present in oocytes and is involved in sperm-egg fusion. Integrin alpha-4/beta-1 is a receptor for VCAM1 and recognizes the sequence Q-I-D-S in VCAM1. Integrin alpha-9/beta-1 is a receptor for VCAM1, cytotactin and osteopontin. It recognizes the sequence A-E-I-D-G-I-E-L in cytotactin. Integrin alpha-3/beta-1 is a receptor for epiligrin, thrombospondin and CSPG4. Integrin alpha-3/beta-1 provides a docking site for FAP (seprase) at invadopodia plasma membranes in a collagen-dependent manner and hence may participate in the adhesion, formation of invadopodia and matrix degradation processes, promoting cell invasion. Alpha-3/beta-1 may mediate with LGALS3 the stimulation by CSPG4 of endothelial cells migration. Integrin alpha-V/beta-1 is a receptor for vitronectin. Beta-1 integrins recognize the sequence R-G-D in a wide array of ligands. When associated with alpha-7/beta-1 integrin, regulates cell adhesion and laminin matrix deposition. Involved in promoting endothelial cell motility and angiogenesis. Involved in osteoblast compaction through the fibronectin fibrillogenesis cell-mediated matrix assembly process and the formation of mineralized bone nodules. May be involved in up-regulation of the activity of kinases such as PKC via binding to KRT1. Together with KRT1 and RACK1, serves as a platform for SRC activation or inactivation. ITGA4:ITGB1 binds to fractalkine (CX3CL1) and may act as its coreceptor in CX3CR1-dependent fractalkine signaling. ITGA4:ITGB1 and ITGA5:ITGB1 bind to PLA2G2A via a site (site 2) which is distinct from the classical ligand-binding site (site 1) and this induces integrin conformational changes and enhanced ligand binding to site 1. ITGA5:ITGB1 acts as a receptor for fibrillin-1 (FBN1) and mediates R-G-D-dependent cell adhesion to FBN1. ITGA5:ITGB1 acts as a receptor for fibronectin FN1 and mediates R-G-D-dependent cell adhesion to FN1. ITGA5:ITGB1 is a receptor for IL1B and binding is essential for IL1B signaling. ITGA5:ITGB3 is a receptor for soluble CD40LG and is required for CD40/CD40LG signaling. Plays an important role in myoblast differentiation and fusion during skeletal myogenesis. This Gallus gallus (Chicken) protein is Integrin beta-1 (ITGB1).